A 79-amino-acid chain; its full sequence is MNPESKLSQRIAEERAKFFQNMKHNGIEDEVFLNWFWNNKYAACEGALSLSVAMMYEGWKGAKKFSLRASAFLDNKILT.

This is an uncharacterized protein from Escherichia coli (Bacteriophage T4).